Here is a 664-residue protein sequence, read N- to C-terminus: Transketolase 1 (664 aa).

Residue His-26 participates in substrate binding. Thiamine diphosphate contacts are provided by residues His-66 and 114-116 (GPL). Residue Asp-155 coordinates Mg(2+). The thiamine diphosphate site is built by Gly-156 and Asn-185. 2 residues coordinate Mg(2+): Asn-185 and Ile-187. Substrate contacts are provided by His-260, Arg-357, and Ser-384. His-260 serves as a coordination point for thiamine diphosphate. Glu-411 acts as the Proton donor in catalysis. Phe-437 serves as a coordination point for thiamine diphosphate. Substrate-binding residues include His-461, Asp-469, and Arg-520.

The protein belongs to the transketolase family. As to quaternary structure, homodimer. It depends on Mg(2+) as a cofactor. The cofactor is Ca(2+). Requires Mn(2+) as cofactor. Co(2+) is required as a cofactor. Thiamine diphosphate serves as cofactor.

It catalyses the reaction D-sedoheptulose 7-phosphate + D-glyceraldehyde 3-phosphate = aldehydo-D-ribose 5-phosphate + D-xylulose 5-phosphate. Functionally, catalyzes the transfer of a two-carbon ketol group from a ketose donor to an aldose acceptor, via a covalent intermediate with the cofactor thiamine pyrophosphate. This is Transketolase 1 (tkt1) from Vibrio parahaemolyticus serotype O3:K6 (strain RIMD 2210633).